The chain runs to 384 residues: G protein-coupled receptor 88 (384 aa).

Over 1 to 35 (MTNSSSTSTSTTTGGSLLLLCEEEESWAGRRIPVS) the chain is Extracellular. An N-linked (GlcNAc...) asparagine glycan is attached at N3. The helical transmembrane segment at 36–56 (LLYSGLAIGGTLANGMVIYLV) threads the bilayer. Residues 57 to 73 (SSFRKLQTTSNAFIVNG) are Cytoplasmic-facing. Residues 74–94 (CAADLSVCALWMPQEAVLGLL) form a helical membrane-spanning segment. The Extracellular portion of the chain corresponds to 95–116 (PAGSAEPPGDWDSGGGSYRLLR). The chain crosses the membrane as a helical span at residues 117–136 (GGLLGLGLTVSLLSHCLVAL). Residues 137 to 158 (NRYLLITRAPATYQVLYQRRHT) lie on the Cytoplasmic side of the membrane. Residues 159–179 (AGMLALSWALALGLVLLLPPW) traverse the membrane as a helical segment. Over 180–195 (APKPGAEPPQVHYPAL) the chain is Extracellular. Residues 196–216 (LAAGALLAQTALLLHCYLGIV) traverse the membrane as a helical segment. The Cytoplasmic portion of the chain corresponds to 217–285 (RRVRVSVKRV…RAQRRLSGLS (69 aa)). Residues 286–306 (VLLLCCVFLLATQPLVWVSLA) traverse the membrane as a helical segment. At 307-310 (SGFS) the chain is on the extracellular side. A helical membrane pass occupies residues 311 to 331 (LPVPWGVQAASWLLCCALSAL). Residues 332 to 384 (NPLLYTWRNEEFRRSVRSVLPGVGDAAAAAAAATAVPAMSQAQLGTRAAGQHW) lie on the Cytoplasmic side of the membrane.

It belongs to the G-protein coupled receptor 1 family. In terms of tissue distribution, expressed predominantly in the striatum. Expressed also in olfactory tubercle, nucleus accumbens, amygdala, and neocortex. Spinal cord, pons, and medulla expression remains discrete. Also expressed in peripheral tissues, including adrenal cortex (16 dpc to 21 dpc) and cochlear ganglia (19 dpc to P3) and also at moderate levels in retina (18 dpc to 19 dpc) and spleen (21 dpc to P7).

It localises to the cell membrane. The protein resides in the cell projection. It is found in the cilium membrane. Its subcellular location is the cytoplasm. The protein localises to the nucleus. Orphan G protein-coupled receptor implicated in a large repertoire of behavioral responses that engage motor activities, spatial learning, and emotional processing. May play a role in the regulation of cognitive and motor function. Couples with the heterotrimeric G protein complex of the G(i) subfamily, consisting of GNAI1, GNB1 and GNG2, thereby acting through a G(i)-mediated pathway. Plays a role in the attenuation of D1 dopamine receptor (D1R)-mediated cAMP response in ciliated cells. In non-ciliated cells, involved in the inhibition of the beta-2 adrenergic receptor (B2AR) response. The chain is G protein-coupled receptor 88 (Gpr88) from Rattus norvegicus (Rat).